The following is a 72-amino-acid chain: Translation initiation factor IF-1 (72 aa).

The 72-residue stretch at Met1 to Lys72 folds into the S1-like domain.

It belongs to the IF-1 family. As to quaternary structure, component of the 30S ribosomal translation pre-initiation complex which assembles on the 30S ribosome in the order IF-2 and IF-3, IF-1 and N-formylmethionyl-tRNA(fMet); mRNA recruitment can occur at any time during PIC assembly.

The protein localises to the cytoplasm. Its function is as follows. One of the essential components for the initiation of protein synthesis. Stabilizes the binding of IF-2 and IF-3 on the 30S subunit to which N-formylmethionyl-tRNA(fMet) subsequently binds. Helps modulate mRNA selection, yielding the 30S pre-initiation complex (PIC). Upon addition of the 50S ribosomal subunit IF-1, IF-2 and IF-3 are released leaving the mature 70S translation initiation complex. In Acetivibrio thermocellus (strain ATCC 27405 / DSM 1237 / JCM 9322 / NBRC 103400 / NCIMB 10682 / NRRL B-4536 / VPI 7372) (Clostridium thermocellum), this protein is Translation initiation factor IF-1.